Reading from the N-terminus, the 125-residue chain is Large ribosomal subunit protein bL12 (125 aa).

It belongs to the bacterial ribosomal protein bL12 family. As to quaternary structure, homodimer. Part of the ribosomal stalk of the 50S ribosomal subunit. Forms a multimeric L10(L12)X complex, where L10 forms an elongated spine to which 2 to 4 L12 dimers bind in a sequential fashion. Binds GTP-bound translation factors.

Functionally, forms part of the ribosomal stalk which helps the ribosome interact with GTP-bound translation factors. Is thus essential for accurate translation. This Ruthia magnifica subsp. Calyptogena magnifica protein is Large ribosomal subunit protein bL12.